The primary structure comprises 304 residues: UDP-N-acetylenolpyruvoylglucosamine reductase (304 aa).

The region spanning 32 to 198 (RVGGPADILV…LSAELELQEG (167 aa)) is the FAD-binding PCMH-type domain. The active site involves R177. The active-site Proton donor is S227. E297 is an active-site residue.

Belongs to the MurB family. FAD serves as cofactor.

The protein resides in the cytoplasm. The catalysed reaction is UDP-N-acetyl-alpha-D-muramate + NADP(+) = UDP-N-acetyl-3-O-(1-carboxyvinyl)-alpha-D-glucosamine + NADPH + H(+). The protein operates within cell wall biogenesis; peptidoglycan biosynthesis. Cell wall formation. The protein is UDP-N-acetylenolpyruvoylglucosamine reductase of Clostridioides difficile (strain 630) (Peptoclostridium difficile).